The following is a 99-amino-acid chain: Malonate decarboxylase acyl carrier protein (99 aa).

At S25 the chain carries O-(phosphoribosyl dephospho-coenzyme A)serine.

In terms of processing, covalently binds the prosthetic group of malonate decarboxylase.

It is found in the cytoplasm. Functionally, subunit of malonate decarboxylase, it is an acyl carrier protein to which acetyl and malonyl thioester residues are bound via a 2'-(5''-phosphoribosyl)-3'-dephospho-CoA prosthetic group and turn over during the catalytic mechanism. This chain is Malonate decarboxylase acyl carrier protein (mdcC), found in Klebsiella pneumoniae.